A 399-amino-acid polypeptide reads, in one-letter code: Stearoyl-[acyl-carrier-protein] 9-desaturase, chloroplastic (399 aa).

Polar residues predominate over residues 1 to 12; it reads MALNLNPVSTPF. The transit peptide at 1 to 35 directs the protein to the chloroplast; the sequence is MALNLNPVSTPFQCRRLPSFSPRQTPSRRSPKFFM. Residues 1-57 are disordered; sequence MALNLNPVSTPFQCRRLPSFSPRQTPSRRSPKFFMASTLSSSSPKEAESLKKPFSPP. Residues Glu-141, Glu-179, His-182, Glu-232, Glu-265, and His-268 each contribute to the Fe cation site.

It belongs to the fatty acid desaturase type 2 family. Homodimer. It depends on Fe(2+) as a cofactor.

It is found in the plastid. It localises to the chloroplast. It carries out the reaction octadecanoyl-[ACP] + 2 reduced [2Fe-2S]-[ferredoxin] + O2 + 2 H(+) = (9Z)-octadecenoyl-[ACP] + 2 oxidized [2Fe-2S]-[ferredoxin] + 2 H2O. Its pathway is lipid metabolism; fatty acid metabolism. Functionally, converts stearoyl-ACP to oleoyl-ACP by introduction of a cis double bond between carbons 9 and 10 of the acyl chain. This is Stearoyl-[acyl-carrier-protein] 9-desaturase, chloroplastic from Spinacia oleracea (Spinach).